The chain runs to 319 residues: NAP1-binding protein (319 aa).

The segment covering 34-43 has biased composition (basic residues); sequence SALRSRRKQM. Positions 34-74 are disordered; sequence SALRSRRKQMRPTGKSVLKRPRKVTDRKTEEKIRTNRRKTP. Over residues 56-67 the composition is skewed to basic and acidic residues; it reads KVTDRKTEEKIR. Serine 251 and serine 260 each carry phosphoserine. The tract at residues 278–319 is disordered; that stretch reads EMQPLQENISPACPTPPYRSRETEKEDETLSPISVDFSSYLS.

In terms of assembly, interacts with NDC1 and MPS2.

In Saccharomyces cerevisiae (strain ATCC 204508 / S288c) (Baker's yeast), this protein is NAP1-binding protein (NBP1).